The primary structure comprises 238 residues: ATP synthase subunit a (238 aa).

The next 5 helical transmembrane spans lie at 17 to 37 (LSNI…AIIC), 75 to 95 (FHVL…LGLP), 112 to 132 (DPIV…YYGI), 172 to 192 (YGNI…LAHI), and 194 to 214 (IFVG…SLFI).

Belongs to the ATPase A chain family. F-type ATPases have 2 components, CF(1) - the catalytic core - and CF(0) - the membrane proton channel. CF(1) has five subunits: alpha(3), beta(3), gamma(1), delta(1), epsilon(1). CF(0) has three main subunits: a(1), b(2) and c(9-12). The alpha and beta chains form an alternating ring which encloses part of the gamma chain. CF(1) is attached to CF(0) by a central stalk formed by the gamma and epsilon chains, while a peripheral stalk is formed by the delta and b chains.

The protein localises to the cell membrane. Functionally, key component of the proton channel; it plays a direct role in the translocation of protons across the membrane. This chain is ATP synthase subunit a, found in Listeria monocytogenes serovar 1/2a (strain ATCC BAA-679 / EGD-e).